A 108-amino-acid polypeptide reads, in one-letter code: Bublin coiled-coil protein (108 aa).

Disordered stretches follow at residues 1–23 (MSGPNGDPNISVEDGLINDDDDF) and 67–108 (RLEF…DEGS). Positions 25–73 (SEEYEAINSMLDQINSYLDDLEERNDSLNGKLHELMESNRQARLEFRAQ) form a coiled coil. Positions 99-108 (ENDKKIDEGS) are enriched in basic and acidic residues.

Belongs to the UPF0184 (EST00098) family.

Its subcellular location is the cell junction. The protein localises to the cytoplasm. It localises to the cytoskeleton. Functionally, essential for intermediate filament organization in intestinal cells, interacts with intermediate filament and regulates intestinal lumen morphology. The protein is Bublin coiled-coil protein (bbln) of Takifugu rubripes (Japanese pufferfish).